We begin with the raw amino-acid sequence, 688 residues long: Potassium-transporting ATPase ATP-binding subunit (688 aa).

4 helical membrane-spanning segments follow: residues 37 to 57 (FLVYISSILTTILYAVSLVGI), 65 to 85 (ILGITIILWLTVLFANFAEAI), 219 to 239 (IALQILLISLTIIFLLVTVSL), and 262 to 282 (VALLVCLAPTTIGALLSSIGI). Catalysis depends on D313, which acts as the 4-aspartylphosphate intermediate. Residues D350, E354, 383 to 390 (FTAKTRMS), and K401 each bind ATP. Mg(2+)-binding residues include D524 and D528. 3 helical membrane-spanning segments follow: residues 594–614 (FAIIPALFIGLYPGLSALNIM), 622–642 (AIFSAIIYNALIIVALIPLAL), and 668–688 (IIVPFIAIKVIDVLITAIGIV).

The protein belongs to the cation transport ATPase (P-type) (TC 3.A.3) family. Type IA subfamily. As to quaternary structure, the system is composed of three essential subunits: KdpA, KdpB and KdpC.

Its subcellular location is the cell membrane. It carries out the reaction K(+)(out) + ATP + H2O = K(+)(in) + ADP + phosphate + H(+). In terms of biological role, part of the high-affinity ATP-driven potassium transport (or Kdp) system, which catalyzes the hydrolysis of ATP coupled with the electrogenic transport of potassium into the cytoplasm. This subunit is responsible for energy coupling to the transport system and for the release of the potassium ions to the cytoplasm. The sequence is that of Potassium-transporting ATPase ATP-binding subunit from Clostridium botulinum (strain Alaska E43 / Type E3).